We begin with the raw amino-acid sequence, 297 residues long: Nitrogenase iron protein (297 aa).

11–18 (GKGGIGKS) lines the ATP pocket. Residue Cys99 coordinates [4Fe-4S] cluster. Residue Arg102 is modified to ADP-ribosylarginine; by dinitrogenase reductase ADP-ribosyltransferase. A [4Fe-4S] cluster-binding site is contributed by Cys133.

The protein belongs to the NifH/BchL/ChlL family. Homodimer. It depends on [4Fe-4S] cluster as a cofactor. The reversible ADP-ribosylation of Arg-102 inactivates the nitrogenase reductase and regulates nitrogenase activity.

The enzyme catalyses N2 + 8 reduced [2Fe-2S]-[ferredoxin] + 16 ATP + 16 H2O = H2 + 8 oxidized [2Fe-2S]-[ferredoxin] + 2 NH4(+) + 16 ADP + 16 phosphate + 6 H(+). The key enzymatic reactions in nitrogen fixation are catalyzed by the nitrogenase complex, which has 2 components: the iron protein and the molybdenum-iron protein. The polypeptide is Nitrogenase iron protein (Mesorhizobium japonicum (strain LMG 29417 / CECT 9101 / MAFF 303099) (Mesorhizobium loti (strain MAFF 303099))).